We begin with the raw amino-acid sequence, 509 residues long: tRNA-2-methylthio-N(6)-dimethylallyladenosine synthase (509 aa).

The interval 1-21 (MNEKQKLESGQVHPSDKKSEK) is disordered. The region spanning 66 to 184 (RKFYIRTYGC…LPELLSEAYL (119 aa)) is the MTTase N-terminal domain. [4Fe-4S] cluster-binding residues include Cys75, Cys111, Cys145, Cys221, Cys225, and Cys228. The Radical SAM core domain occupies 207 to 437 (RNGKIKGWVN…NALVNEISAK (231 aa)). The region spanning 440–503 (KEYEGKVVEV…TWSLDGEMVG (64 aa)) is the TRAM domain.

The protein belongs to the methylthiotransferase family. MiaB subfamily. In terms of assembly, monomer. [4Fe-4S] cluster serves as cofactor.

The protein localises to the cytoplasm. It carries out the reaction N(6)-dimethylallyladenosine(37) in tRNA + (sulfur carrier)-SH + AH2 + 2 S-adenosyl-L-methionine = 2-methylsulfanyl-N(6)-dimethylallyladenosine(37) in tRNA + (sulfur carrier)-H + 5'-deoxyadenosine + L-methionine + A + S-adenosyl-L-homocysteine + 2 H(+). It catalyses the reaction N(6)-dimethylallyladenosine(37) in tRNA + (sulfur carrier)-SH + AH2 + S-adenosyl-L-methionine = 2-thio-N(6)-dimethylallyladenosine(37) in tRNA + (sulfur carrier)-H + 5'-deoxyadenosine + L-methionine + A + H(+). The enzyme catalyses 2-thio-N(6)-dimethylallyladenosine(37) in tRNA + S-adenosyl-L-methionine = 2-methylsulfanyl-N(6)-dimethylallyladenosine(37) in tRNA + S-adenosyl-L-homocysteine + H(+). Its function is as follows. Catalyzes the methylthiolation of N6-(dimethylallyl)adenosine (i(6)A), leading to the formation of 2-methylthio-N6-(dimethylallyl)adenosine (ms(2)i(6)A) at position 37 in tRNAs that read codons beginning with uridine. In Bacillus subtilis (strain 168), this protein is tRNA-2-methylthio-N(6)-dimethylallyladenosine synthase.